Consider the following 92-residue polypeptide: MDISTDNPDHGFQFPGTFELSAMGAAERGLETELPRLLAATGVELLQESVSWKHSSSGKYVSVKIGFRAESREQFDAAHQALRDHPEVKWTL.

The protein belongs to the UPF0250 family.

In Xanthomonas oryzae pv. oryzae (strain MAFF 311018), this protein is UPF0250 protein XOO3732.